Here is a 190-residue protein sequence, read N- to C-terminus: Xanthine phosphoribosyltransferase (190 aa).

Residues L20 and N27 each coordinate xanthine. 5-phospho-alpha-D-ribose 1-diphosphate is bound at residue 128-132; it reads ANGKA. K156 serves as a coordination point for xanthine.

It belongs to the purine/pyrimidine phosphoribosyltransferase family. Xpt subfamily. Homodimer.

The protein resides in the cytoplasm. It carries out the reaction XMP + diphosphate = xanthine + 5-phospho-alpha-D-ribose 1-diphosphate. The protein operates within purine metabolism; XMP biosynthesis via salvage pathway; XMP from xanthine: step 1/1. Functionally, converts the preformed base xanthine, a product of nucleic acid breakdown, to xanthosine 5'-monophosphate (XMP), so it can be reused for RNA or DNA synthesis. The chain is Xanthine phosphoribosyltransferase from Stutzerimonas stutzeri (strain A1501) (Pseudomonas stutzeri).